The chain runs to 245 residues: Ribosomal RNA large subunit methyltransferase E (245 aa).

The S-adenosyl-L-methionine site is built by Gly-58, Trp-60, Asp-78, Asp-96, and Asp-123. Lys-163 acts as the Proton acceptor in catalysis.

It belongs to the class I-like SAM-binding methyltransferase superfamily. RNA methyltransferase RlmE family.

It is found in the cytoplasm. The catalysed reaction is uridine(2552) in 23S rRNA + S-adenosyl-L-methionine = 2'-O-methyluridine(2552) in 23S rRNA + S-adenosyl-L-homocysteine + H(+). In terms of biological role, specifically methylates the uridine in position 2552 of 23S rRNA at the 2'-O position of the ribose in the fully assembled 50S ribosomal subunit. The polypeptide is Ribosomal RNA large subunit methyltransferase E (Methanocaldococcus jannaschii (strain ATCC 43067 / DSM 2661 / JAL-1 / JCM 10045 / NBRC 100440) (Methanococcus jannaschii)).